We begin with the raw amino-acid sequence, 633 residues long: MNIRSNPDTTLPAVTTGPLPSSRKIYAAPDSAPDLRVPLREIILSEAAGEPNLPVYDTSGPYTDPSVTIDVNAGLPRNRTAWVLERGGVEEYEGRDIKPEDNGNVGADKAAKAFIAHHKPLRGLDGHKITQLEFARAGIITKEMIYVAERENLGRKQQLERAEAALADGESFGAEVPAFITPEFVRSEIARGRAIIPCNINHAELEPMIIGRNFLTKINANIGNSAVTSSVEEEVDKMVWAIRWGADTVMDLSTGRNIHTTREWILRNSPVPIGTVPIYQALEKCNGDPVKLTWELYKDTLIEQCEQGVDYFTIHAGVRLQYIHLTASRVTGIVSRGGSIMAKWCLAHHKESFLYTHFDEICDIMRKYDVSFSLGDGLRPGSIADANDRAQFAELETLGELTKIAWDKGCQVMIEGPGHVPMHKIKINMDKQLKECGEAPFYTLGPLTTDIAPGYDHITSGIGAAMIGWFGCAMLCYVTPKEHLGLPDRNDVKTGVITYKIAAHAADLAKGHPAAQLRDDALSRARFEFRWTDQFNLGLDPDTAKSFHDETLPKEAHKVAHFCSMCGPKFCSMKITQDVRDYAATLNDPTTVGVTISGTIEDGMAQMSAKFKEMGGSVYLDADKVKESNKALS.

Positions 1 to 13 are enriched in polar residues; it reads MNIRSNPDTTLPA. The tract at residues 1 to 22 is disordered; it reads MNIRSNPDTTLPAVTTGPLPSS. Substrate is bound by residues N221, M250, Y279, H315, 335–337, 376–379, and E415; these read SRG and DGLR. H419 provides a ligand contact to Zn(2+). Position 442 (Y442) interacts with substrate. Position 483 (H483) interacts with Zn(2+). [4Fe-4S] cluster contacts are provided by C563, C566, and C571.

This sequence belongs to the ThiC family. Homodimer. [4Fe-4S] cluster serves as cofactor.

It carries out the reaction 5-amino-1-(5-phospho-beta-D-ribosyl)imidazole + S-adenosyl-L-methionine = 4-amino-2-methyl-5-(phosphooxymethyl)pyrimidine + CO + 5'-deoxyadenosine + formate + L-methionine + 3 H(+). It participates in cofactor biosynthesis; thiamine diphosphate biosynthesis. Its function is as follows. Catalyzes the synthesis of the hydroxymethylpyrimidine phosphate (HMP-P) moiety of thiamine from aminoimidazole ribotide (AIR) in a radical S-adenosyl-L-methionine (SAM)-dependent reaction. The chain is Phosphomethylpyrimidine synthase from Bradyrhizobium sp. (strain BTAi1 / ATCC BAA-1182).